The sequence spans 156 residues: Small ribosomal subunit protein uS7c (156 aa).

It belongs to the universal ribosomal protein uS7 family. In terms of assembly, part of the 30S ribosomal subunit.

It is found in the plastid. The protein localises to the chloroplast. Functionally, one of the primary rRNA binding proteins, it binds directly to 16S rRNA where it nucleates assembly of the head domain of the 30S subunit. The chain is Small ribosomal subunit protein uS7c (rps7) from Euglena gracilis.